A 78-amino-acid polypeptide reads, in one-letter code: Non-structural protein 7 (78 aa).

Positions 1–23 are cleaved as a signal peptide; the sequence is MLVLLHAVFITVLTLLLLGRLQL. Topologically, residues 24-57 are lumenal; it reads LERLLLNHSFNLKTVADFNILYRSLAETRLLKVV. The tract at residues 54–65 is interaction with PPP1CC/PP1-gamma; that stretch reads LKVVLRLIFLVL. The chain crosses the membrane as a helical span at residues 58–78; it reads LRLIFLVLLGFCCYRLLVILM.

Belongs to the coronaviruses ns7/ns7a protein family. As to quaternary structure, interacts with serine/threonine-protein phosphatase PPP1CC/PP1-gamma; this interaction; this interaction probably promotes EIF2S1/eIF-2alpha dephosphorylation.

It localises to the host membrane. In terms of biological role, inhibits the integrated stress response (ISR) in the infected cell by promoting EIF2S1/eIF-2alpha dephosphorylation. Acts as a functional homolog of host PPP1R15A/GADD34 to recruit PP1 phosphatase and dephosphorylate host EIF2S1/eIF-2alpha. May function in the formation of membrane-bound replication complexes or in the assembly of the virus. The chain is Non-structural protein 7 from Sus scrofa (Pig).